Reading from the N-terminus, the 710-residue chain is TRP-like ion channel pkd2 (710 aa).

An N-terminal signal peptide occupies residues 1-23 (MRLWRSPLLLLVVVVELFSWADA). The next 9 helical transmembrane spans lie at 173–193 (WVMC…SPVL), 197–217 (ALWE…IQAL), 322–342 (FFAT…LVAM), 376–396 (FFYR…MWEI), 404–424 (LAFL…YAFV), 466–486 (FFYF…FIGF), 492–512 (KVQG…MVIL), 525–545 (IGVA…CQAF), and 555–575 (IGII…LGIF). A phosphoserine mark is found at Ser599 and Ser632. The segment at 689–710 (RISENNNNAERRRKPLPNNAFR) is disordered.

This sequence belongs to the transient receptor potential (TRP) ion channel family. In terms of assembly, interacts with rho1.

It is found in the cell membrane. The protein localises to the golgi apparatus membrane. Functionally, acts as a key signaling component in the regulation of cell shape and cell wall synthesis through interaction with GTPase Rho1. The protein is TRP-like ion channel pkd2 (pkd2) of Schizosaccharomyces pombe (strain 972 / ATCC 24843) (Fission yeast).